A 156-amino-acid chain; its full sequence is Lipoprotein signal peptidase (156 aa).

The next 2 membrane-spanning stretches (helical) occupy residues 52 to 72 (ILEGQMWLFYIITSIVVIGIV) and 85 to 105 (FATALALILGGAIGNFIDRIF). Catalysis depends on residues Asp-111 and Asp-129. The helical transmembrane segment at 121–141 (NFPIFNVADSALCVGVGILFL) threads the bilayer.

Belongs to the peptidase A8 family.

The protein resides in the cell membrane. It catalyses the reaction Release of signal peptides from bacterial membrane prolipoproteins. Hydrolyzes -Xaa-Yaa-Zaa-|-(S,diacylglyceryl)Cys-, in which Xaa is hydrophobic (preferably Leu), and Yaa (Ala or Ser) and Zaa (Gly or Ala) have small, neutral side chains.. The protein operates within protein modification; lipoprotein biosynthesis (signal peptide cleavage). Functionally, this protein specifically catalyzes the removal of signal peptides from prolipoproteins. This is Lipoprotein signal peptidase from Halalkalibacterium halodurans (strain ATCC BAA-125 / DSM 18197 / FERM 7344 / JCM 9153 / C-125) (Bacillus halodurans).